Consider the following 519-residue polypeptide: Cysteine--tRNA ligase (519 aa).

Cys30 is a Zn(2+) binding site. Positions Pro32–Asn42 match the 'HIGH' region motif. Zn(2+)-binding residues include Cys221, His253, and Glu257. The short motif at Lys286–Ser290 is the 'KMSKS' region element. Lys289 serves as a coordination point for ATP.

It belongs to the class-I aminoacyl-tRNA synthetase family. Monomer. The cofactor is Zn(2+).

Its subcellular location is the cytoplasm. It carries out the reaction tRNA(Cys) + L-cysteine + ATP = L-cysteinyl-tRNA(Cys) + AMP + diphosphate. In Cereibacter sphaeroides (strain KD131 / KCTC 12085) (Rhodobacter sphaeroides), this protein is Cysteine--tRNA ligase.